A 484-amino-acid polypeptide reads, in one-letter code: tRNA-2-methylthio-N(6)-dimethylallyladenosine synthase (484 aa).

An MTTase N-terminal domain is found at glycine 29–alanine 149. The [4Fe-4S] cluster site is built by cysteine 38, cysteine 78, cysteine 112, cysteine 186, cysteine 190, and cysteine 193. The 230-residue stretch at arginine 172–glutamate 401 folds into the Radical SAM core domain. In terms of domain architecture, TRAM spans alanine 404–valine 474.

This sequence belongs to the methylthiotransferase family. MiaB subfamily. As to quaternary structure, monomer. [4Fe-4S] cluster is required as a cofactor.

The protein resides in the cytoplasm. It catalyses the reaction N(6)-dimethylallyladenosine(37) in tRNA + (sulfur carrier)-SH + AH2 + 2 S-adenosyl-L-methionine = 2-methylsulfanyl-N(6)-dimethylallyladenosine(37) in tRNA + (sulfur carrier)-H + 5'-deoxyadenosine + L-methionine + A + S-adenosyl-L-homocysteine + 2 H(+). Its function is as follows. Catalyzes the methylthiolation of N6-(dimethylallyl)adenosine (i(6)A), leading to the formation of 2-methylthio-N6-(dimethylallyl)adenosine (ms(2)i(6)A) at position 37 in tRNAs that read codons beginning with uridine. This is tRNA-2-methylthio-N(6)-dimethylallyladenosine synthase from Bifidobacterium longum subsp. infantis (strain ATCC 15697 / DSM 20088 / JCM 1222 / NCTC 11817 / S12).